We begin with the raw amino-acid sequence, 138 residues long: Small ribosomal subunit protein bS6 (138 aa).

Residues 97-121 (TEQSEMLKAEENRSERRERRDRPDN) are compositionally biased toward basic and acidic residues. The segment at 97–138 (TEQSEMLKAEENRSERRERRDRPDNTDGSNENDSDSDNNADE) is disordered. The span at 126 to 138 (NENDSDSDNNADE) shows a compositional bias: acidic residues.

This sequence belongs to the bacterial ribosomal protein bS6 family.

Binds together with bS18 to 16S ribosomal RNA. The sequence is that of Small ribosomal subunit protein bS6 from Stutzerimonas stutzeri (strain A1501) (Pseudomonas stutzeri).